The following is a 360-amino-acid chain: Epoxyqueuosine reductase (360 aa).

The active-site Proton donor is Asp142. Residues 187–216 (APTEPVTAHCGSCQACMDVCPTQAIVAPHR) form the 4Fe-4S ferredoxin-type domain. Positions 196, 199, 202, 206, 222, 249, 252, and 256 each coordinate [4Fe-4S] cluster.

This sequence belongs to the QueG family. As to quaternary structure, monomer. The cofactor is cob(II)alamin. [4Fe-4S] cluster is required as a cofactor.

It is found in the cytoplasm. It catalyses the reaction epoxyqueuosine(34) in tRNA + AH2 = queuosine(34) in tRNA + A + H2O. It participates in tRNA modification; tRNA-queuosine biosynthesis. Functionally, catalyzes the conversion of epoxyqueuosine (oQ) to queuosine (Q), which is a hypermodified base found in the wobble positions of tRNA(Asp), tRNA(Asn), tRNA(His) and tRNA(Tyr). The sequence is that of Epoxyqueuosine reductase from Alicycliphilus denitrificans (strain DSM 14773 / CIP 107495 / K601).